A 440-amino-acid polypeptide reads, in one-letter code: Sialyltransferase-like protein 2 (440 aa).

Over 1 to 5 (MKLLH) the chain is Cytoplasmic. A helical; Signal-anchor for type II membrane protein transmembrane segment spans residues 6–26 (LIFLLALTTGISAVLIYIIGV). Residues 27 to 440 (SNLYESNRFT…HGQLCITPAD (414 aa)) lie on the Lumenal side of the membrane. N-linked (GlcNAc...) asparagine glycans are attached at residues asparagine 113 and asparagine 149.

Belongs to the glycosyltransferase 29 family.

It localises to the golgi apparatus membrane. Functionally, may be involved in the transfer of 2-keto-3-deoxy-D-lyxo-heptulosaric acid (Dha) and/or 2-keto-3-deoxy-D-manno-octulosonic acid (Kdo) on the homogalacturonan backbone of rhamnogalacturonan-II. Required for efficient pollen grain germination and pollen tube elongation. Does not possess sialyltransferase activity in vitro. The sequence is that of Sialyltransferase-like protein 2 from Arabidopsis thaliana (Mouse-ear cress).